We begin with the raw amino-acid sequence, 277 residues long: Ribosomal RNA small subunit methyltransferase A (277 aa).

Residues asparagine 20, leucine 22, glycine 47, glutamate 68, aspartate 93, and asparagine 114 each contribute to the S-adenosyl-L-methionine site.

This sequence belongs to the class I-like SAM-binding methyltransferase superfamily. rRNA adenine N(6)-methyltransferase family. RsmA subfamily.

The protein localises to the cytoplasm. It carries out the reaction adenosine(1518)/adenosine(1519) in 16S rRNA + 4 S-adenosyl-L-methionine = N(6)-dimethyladenosine(1518)/N(6)-dimethyladenosine(1519) in 16S rRNA + 4 S-adenosyl-L-homocysteine + 4 H(+). In terms of biological role, specifically dimethylates two adjacent adenosines (A1518 and A1519) in the loop of a conserved hairpin near the 3'-end of 16S rRNA in the 30S particle. May play a critical role in biogenesis of 30S subunits. The polypeptide is Ribosomal RNA small subunit methyltransferase A (Aliivibrio salmonicida (strain LFI1238) (Vibrio salmonicida (strain LFI1238))).